A 284-amino-acid polypeptide reads, in one-letter code: Acetyl-coenzyme A carboxylase carboxyl transferase subunit beta (284 aa).

Residues 31-284 form the CoA carboxyltransferase N-terminal domain; that stretch reads FWTYCKGCDS…LYQILAMHKK (254 aa). Residues Cys-35, Cys-38, Cys-54, and Cys-57 each coordinate Zn(2+). The C4-type zinc-finger motif lies at 35–57; that stretch reads CKGCDSHVFRKDIEENSFVCPKC.

Belongs to the AccD/PCCB family. As to quaternary structure, acetyl-CoA carboxylase is a heterohexamer composed of biotin carboxyl carrier protein (AccB), biotin carboxylase (AccC) and two subunits each of ACCase subunit alpha (AccA) and ACCase subunit beta (AccD). Zn(2+) is required as a cofactor.

It localises to the cytoplasm. It carries out the reaction N(6)-carboxybiotinyl-L-lysyl-[protein] + acetyl-CoA = N(6)-biotinyl-L-lysyl-[protein] + malonyl-CoA. It participates in lipid metabolism; malonyl-CoA biosynthesis; malonyl-CoA from acetyl-CoA: step 1/1. In terms of biological role, component of the acetyl coenzyme A carboxylase (ACC) complex. Biotin carboxylase (BC) catalyzes the carboxylation of biotin on its carrier protein (BCCP) and then the CO(2) group is transferred by the transcarboxylase to acetyl-CoA to form malonyl-CoA. This Clostridioides difficile (strain 630) (Peptoclostridium difficile) protein is Acetyl-coenzyme A carboxylase carboxyl transferase subunit beta.